The sequence spans 225 residues: Holliday junction branch migration complex subunit RuvA (225 aa).

The interval 1 to 71 (MISWINGELV…EDSDLLFGFT (71 aa)) is domain I. The interval 72-150 (SKDQKFFFIE…SKIQIEEEKG (79 aa)) is domain II. Residues 151–161 (QEEFEITNPEI) are flexible linker. Residues 161–225 (IYKLMEDLQL…LDQGNSNLAR (65 aa)) are domain III.

Belongs to the RuvA family. As to quaternary structure, homotetramer. Forms an RuvA(8)-RuvB(12)-Holliday junction (HJ) complex. HJ DNA is sandwiched between 2 RuvA tetramers; dsDNA enters through RuvA and exits via RuvB. An RuvB hexamer assembles on each DNA strand where it exits the tetramer. Each RuvB hexamer is contacted by two RuvA subunits (via domain III) on 2 adjacent RuvB subunits; this complex drives branch migration. In the full resolvosome a probable DNA-RuvA(4)-RuvB(12)-RuvC(2) complex forms which resolves the HJ.

It is found in the cytoplasm. Its function is as follows. The RuvA-RuvB-RuvC complex processes Holliday junction (HJ) DNA during genetic recombination and DNA repair, while the RuvA-RuvB complex plays an important role in the rescue of blocked DNA replication forks via replication fork reversal (RFR). RuvA specifically binds to HJ cruciform DNA, conferring on it an open structure. The RuvB hexamer acts as an ATP-dependent pump, pulling dsDNA into and through the RuvAB complex. HJ branch migration allows RuvC to scan DNA until it finds its consensus sequence, where it cleaves and resolves the cruciform DNA. This chain is Holliday junction branch migration complex subunit RuvA, found in Prochlorococcus marinus (strain MIT 9215).